Here is a 312-residue protein sequence, read N- to C-terminus: Prephenate dehydratase (312 aa).

The Prephenate dehydratase domain occupies 3–194; it reads GIAYLGPEGT…ARTRFVLVGR (192 aa). One can recognise an ACT domain in the interval 208–285; the sequence is SVVLQLDNVP…ADVRYLGSWP (78 aa). A disordered region spans residues 291-312; it reads GAAPPPMDESASWLEGLREGRP.

As to quaternary structure, homodimer.

It catalyses the reaction prephenate + H(+) = 3-phenylpyruvate + CO2 + H2O. It functions in the pathway amino-acid biosynthesis; L-phenylalanine biosynthesis; phenylpyruvate from prephenate: step 1/1. This Mycolicibacterium vanbaalenii (strain DSM 7251 / JCM 13017 / BCRC 16820 / KCTC 9966 / NRRL B-24157 / PYR-1) (Mycobacterium vanbaalenii) protein is Prephenate dehydratase (pheA).